The chain runs to 882 residues: Homeobox-leucine zipper protein ROC3 (882 aa).

The disordered stretch occupies residues 104–144 (DVDDDHKPQHSGHDQPPDAAQPSGAAGGNAKKKRYHRHTAH). A compositionally biased stretch (basic and acidic residues) spans 107–119 (DDHKPQHSGHDQP). Positions 133–143 (AKKKRYHRHTA) are enriched in basic residues. A DNA-binding region (homeobox) is located at residues 134-193 (KKKRYHRHTAHQIQQMEALFKECPHPDDKQRLKLSQELGLKPRQVKFWFQNRRTQMKAQQ). Positions 200 to 263 (ILRAENENLK…LDRLACIATR (64 aa)) form a coiled coil. The START domain occupies 340–584 (QEQDKQLVVD…LQRQCERLAS (245 aa)). Low complexity predominate over residues 782 to 816 (AAAPTISSSTTTTTGNGNGETSSTPPRNSSSNNNN). The disordered stretch occupies residues 782–820 (AAAPTISSSTTTTTGNGNGETSSTPPRNSSSNNNNADEL).

It belongs to the HD-ZIP homeobox family. Class IV subfamily.

It is found in the nucleus. Its function is as follows. Probable transcription factor. This chain is Homeobox-leucine zipper protein ROC3 (ROC3), found in Oryza sativa subsp. indica (Rice).